The chain runs to 257 residues: TLC domain-containing protein 3A (257 aa).

7 helical membrane passes run 1–21 (MLLT…LCTW), 42–62 (LVSS…IRSC), 77–97 (VWFL…CEWC), 113–135 (FLSR…VPVA), 142–162 (LGDF…FVSL), 181–201 (GILT…FMYW), and 220–240 (FYCN…FCLL). The TLC domain occupies 33–249 (TDCVMISTRL…LCRKAVRLFD (217 aa)).

As to quaternary structure, interacts with GGT7 isoform 3 and SLC3A2. As to expression, highly expressed in pancreas. Detected at intermediate levels in heart, placenta and kidney, and at low levels in brain, liver and skeletal muscle. Not detected in normal lung.

Its subcellular location is the cell membrane. The protein is TLC domain-containing protein 3A of Homo sapiens (Human).